The chain runs to 154 residues: MGLSDGEWQLVLNVWGKVEADLAGHGQEVLIRLFKGHPETLEKFDKFKHLKSEDEMKGSEDLKKHGNTVLTALGGILKKKGKHEAELKPLAQSHATKHKIPIKYLEFISEAIIQVLQSKHPGDFGADAQGAMKRALELFRNDIAAKYKELGFQG.

Residues 2–148 (GLSDGEWQLV…FRNDIAAKYK (147 aa)) form the Globin domain. Ser4 is subject to Phosphoserine. A nitrite-binding site is contributed by His65. His65 serves as a coordination point for O2. Thr68 bears the Phosphothreonine mark. His94 serves as a coordination point for heme b.

Belongs to the globin family. In terms of assembly, monomeric.

Its subcellular location is the cytoplasm. The protein localises to the sarcoplasm. It catalyses the reaction Fe(III)-heme b-[protein] + nitric oxide + H2O = Fe(II)-heme b-[protein] + nitrite + 2 H(+). The enzyme catalyses H2O2 + AH2 = A + 2 H2O. Functionally, monomeric heme protein which primary function is to store oxygen and facilitate its diffusion within muscle tissues. Reversibly binds oxygen through a pentacoordinated heme iron and enables its timely and efficient release as needed during periods of heightened demand. Depending on the oxidative conditions of tissues and cells, and in addition to its ability to bind oxygen, it also has a nitrite reductase activity whereby it regulates the production of bioactive nitric oxide. Under stress conditions, like hypoxia and anoxia, it also protects cells against reactive oxygen species thanks to its pseudoperoxidase activity. The polypeptide is Myoglobin (MB) (Lutra lutra (European river otter)).